A 692-amino-acid chain; its full sequence is Phenoloxidase subunit 2 (692 aa).

The propeptide occupies 1-97; it reads MTDRVKSLQL…PRHQEMATEV (97 aa). Histidine 213, histidine 217, and histidine 243 together coordinate Cu cation. 3 N-linked (GlcNAc...) asparagine glycosylation sites follow: asparagine 256, asparagine 295, and asparagine 309. Catalysis depends on glutamate 351, which acts as the Proton acceptor. Cu cation is bound by residues histidine 366, histidine 370, and histidine 406. N-linked (GlcNAc...) asparagine glycosylation is present at asparagine 494. 2 disulfide bridges follow: cysteine 583-cysteine 628 and cysteine 585-cysteine 635.

This sequence belongs to the tyrosinase family. Heterodimer. Requires Cu(2+) as cofactor.

Its subcellular location is the secreted. The catalysed reaction is L-tyrosine + O2 = L-dopaquinone + H2O. It catalyses the reaction 2 L-dopa + O2 = 2 L-dopaquinone + 2 H2O. Functionally, copper-containing oxidase that functions in the formation of pigments such as melanins and other polyphenolic compounds. Catalyzes the rate-limiting conversions of tyrosine to DOPA, DOPA to DOPA-quinone and possibly 5,6 dihydroxyindole to indole-5'6 quinone. Binds to the surface of hemocytes and is involved in hemocyte melanization. Binds the A.niger cell wall component alpha-1,3-glucan, a fungal pathogen-associated molecular pattern (PAMP) that activates the host immune response. This chain is Phenoloxidase subunit 2, found in Galleria mellonella (Greater wax moth).